The primary structure comprises 296 residues: Polyamine aminopropyltransferase (296 aa).

Residues 16–251 form the PABS domain; it reads HLWYFEYYTG…GMWSYTFASK (236 aa). Gln46 provides a ligand contact to S-methyl-5'-thioadenosine. Positions 77 and 101 each coordinate spermidine. Residues Glu121 and 152-153 each bind S-methyl-5'-thioadenosine; that span reads NG. Asp170 (proton acceptor) is an active-site residue. 170 to 173 is a spermidine binding site; the sequence is DSTD.

The protein belongs to the spermidine/spermine synthase family. As to quaternary structure, homotetramer.

The protein resides in the cytoplasm. It catalyses the reaction S-adenosyl 3-(methylsulfanyl)propylamine + putrescine = S-methyl-5'-thioadenosine + spermidine + H(+). It functions in the pathway amine and polyamine biosynthesis; spermidine biosynthesis; spermidine from putrescine: step 1/1. Strongly inhibited by S-adenosyl-1,8-diamino-3-thiooctane. In terms of biological role, catalyzes the irreversible transfer of a propylamine group from the amino donor S-adenosylmethioninamine (decarboxy-AdoMet) to putrescine (1,4-diaminobutane) to yield spermidine. It has lower affinity and lower activity towards 1,3-diaminopropane, cadaverine (1,5-diaminopentane), agmatine, norspermidine and spermidine (in vitro). The polypeptide is Polyamine aminopropyltransferase (Thermotoga maritima (strain ATCC 43589 / DSM 3109 / JCM 10099 / NBRC 100826 / MSB8)).